The following is a 747-amino-acid chain: Fibroblast growth factor receptor (747 aa).

The signal sequence occupies residues 1-24; that stretch reads MIQLQNTFIFIALTIFTSASTTSL. Over 25–288 the chain is Extracellular; it reads KNETKPLNTI…TEEIPQDTHY (264 aa). Asn-26, Asn-42, and Asn-63 each carry an N-linked (GlcNAc...) asparagine glycan. The disordered stretch occupies residues 47–68; it reads EEDLFDTNGAPKSDTVNASTTT. Ig-like C2-type domains follow at residues 74–167 and 175–267; these read PRWV…YELD and PPVL…AWLT. Cysteines 99 and 151 form a disulfide. N-linked (GlcNAc...) asparagine glycans are attached at residues Asn-161, Asn-185, Asn-217, Asn-227, and Asn-240. The cysteines at positions 198 and 251 are disulfide-linked. Residues 289 to 309 traverse the membrane as a helical segment; that stretch reads LIYIFGVVCFIILLAFIVYMC. Topologically, residues 310-747 are cytoplasmic; it reads NSRYQNKDPP…NGHARMQSDV (438 aa). One can recognise a Protein kinase domain in the interval 377–660; the sequence is ILLHERIDEG…QLVEDLDRML (284 aa). Residues 383–391 and Lys-412 contribute to the ATP site; that span reads IDEGFFGQV. Catalysis depends on Asp-525, which acts as the Proton acceptor. Tyr-556 carries the post-translational modification Phosphotyrosine; by autocatalysis. The interval 679-731 is disordered; that stretch reads YLPSDVDSNEDTESRDSANATGEDSDSVFEPIDGHGAHAYEVDEAGPLLNPQP. Basic and acidic residues predominate over residues 710 to 719; that stretch reads IDGHGAHAYE.

Belongs to the protein kinase superfamily. Tyr protein kinase family. Fibroblast growth factor receptor subfamily.

The protein localises to the membrane. It carries out the reaction L-tyrosyl-[protein] + ATP = O-phospho-L-tyrosyl-[protein] + ADP + H(+). Its function is as follows. Receptor for basic fibroblast growth factor. This chain is Fibroblast growth factor receptor (FGFR), found in Ciona intestinalis (Transparent sea squirt).